We begin with the raw amino-acid sequence, 212 residues long: Adenylate kinase (212 aa).

Gly14–Thr19 is an ATP binding site. The segment at Ser34–Val63 is NMP. Residues Thr35, Arg40, Ser61–Val63, Gly89–Arg92, and Gln96 contribute to the AMP site. The tract at residues Gln126–Asp163 is LID. Position 127 (Arg127) interacts with ATP. Zn(2+) contacts are provided by Cys130 and Cys133. ATP is bound at residue Ser136 to Tyr137. Cys150 and Asp153 together coordinate Zn(2+). Residues Arg160 and Arg171 each contribute to the AMP site. Gln199 is an ATP binding site.

This sequence belongs to the adenylate kinase family. Monomer.

The protein resides in the cytoplasm. The catalysed reaction is AMP + ATP = 2 ADP. It participates in purine metabolism; AMP biosynthesis via salvage pathway; AMP from ADP: step 1/1. Its function is as follows. Catalyzes the reversible transfer of the terminal phosphate group between ATP and AMP. Plays an important role in cellular energy homeostasis and in adenine nucleotide metabolism. The sequence is that of Adenylate kinase from Mesomycoplasma hyopneumoniae (strain J / ATCC 25934 / NCTC 10110) (Mycoplasma hyopneumoniae).